The following is a 439-amino-acid chain: Probable glycine dehydrogenase (decarboxylating) subunit 1 (439 aa).

It belongs to the GcvP family. N-terminal subunit subfamily. In terms of assembly, the glycine cleavage system is composed of four proteins: P, T, L and H. In this organism, the P 'protein' is a heterodimer of two subunits.

The enzyme catalyses N(6)-[(R)-lipoyl]-L-lysyl-[glycine-cleavage complex H protein] + glycine + H(+) = N(6)-[(R)-S(8)-aminomethyldihydrolipoyl]-L-lysyl-[glycine-cleavage complex H protein] + CO2. Functionally, the glycine cleavage system catalyzes the degradation of glycine. The P protein binds the alpha-amino group of glycine through its pyridoxal phosphate cofactor; CO(2) is released and the remaining methylamine moiety is then transferred to the lipoamide cofactor of the H protein. The protein is Probable glycine dehydrogenase (decarboxylating) subunit 1 of Aquifex aeolicus (strain VF5).